A 350-amino-acid chain; its full sequence is tRNA uridine(34) hydroxylase (350 aa).

The Rhodanese domain maps to 146 to 240 (DDPDALFIDM…YARKAREQGL (95 aa)). The active-site Cysteine persulfide intermediate is Cys-200.

Belongs to the TrhO family.

It catalyses the reaction uridine(34) in tRNA + AH2 + O2 = 5-hydroxyuridine(34) in tRNA + A + H2O. Catalyzes oxygen-dependent 5-hydroxyuridine (ho5U) modification at position 34 in tRNAs. This chain is tRNA uridine(34) hydroxylase, found in Shigella flexneri serotype 5b (strain 8401).